The chain runs to 329 residues: Major outer membrane protein P.IB (329 aa).

A signal peptide spans 1 to 19; the sequence is MKKSLIALTLAALPVAAMA.

Belongs to the Gram-negative porin family. As to quaternary structure, homotrimer.

Its subcellular location is the cell outer membrane. Serves as a slightly cation selective porin. The protein is Major outer membrane protein P.IB (porB) of Neisseria meningitidis serogroup A / serotype 4A (strain DSM 15465 / Z2491).